Reading from the N-terminus, the 253-residue chain is Tetraspanin-11 (253 aa).

Transmembrane regions (helical) follow at residues 19–39, 63–83, and 93–113; these read LLFV…AVGI, ILIF…GAIL, and YFCL…LAHV. N-linked (GlcNAc...) asparagine glycosylation is present at Asn127. Residues 220–240 traverse the membrane as a helical segment; the sequence is LLLMGAVGIGVACLQICGMVL.

The protein belongs to the tetraspanin (TM4SF) family.

It localises to the membrane. The chain is Tetraspanin-11 (TSPAN11) from Homo sapiens (Human).